The sequence spans 276 residues: Secretagogin (276 aa).

EF-hand domains follow at residues 12-47 (LDAAGFWQIWQRFDADEKGYIEEKELDAFFHHVLTK), 58-93 (NVWKMKQQFMAAHDVSKDGHIQMKELACLFLSEDEN), 105-140 (DSSVEFMQIWRKYDADSSGFISAAELCNFLRDLFLH), 149-184 (KLEEYTGTMMKIFDKNKDGRLDLNDLARILALQENF), 197-232 (ERKRDFEKIFAHYDVSKTGALEGPEVDGFVKDMMEL), and 240-276 (VDLDKFREILLRHCDVNKDGKIQKSELALCLGLKINP). Residues Asp-71, Ser-73, Asp-75, His-77, Glu-82, Asp-118, Asp-120, Ser-122, Glu-129, Asp-162, Asn-164, Asp-166, Arg-168, Asp-173, Asp-210, Ser-212, Thr-214, Glu-221, Asp-254, Asn-256, Asp-258, Lys-260, and Glu-265 each coordinate Ca(2+).

Its subcellular location is the cytoplasm. The protein resides in the secreted. It is found in the cytoplasmic vesicle. It localises to the secretory vesicle membrane. The polypeptide is Secretagogin (SCGN) (Sus scrofa (Pig)).